A 1086-amino-acid polypeptide reads, in one-letter code: Auxin response factor 19 (1086 aa).

Residues 126–228 (FCKTLTASDT…QLMLGIRRAN (103 aa)) constitute a DNA-binding region (TF-B3). A compositionally biased stretch (polar residues) spans 454–485 (PSKLLNFQSPNLSSANSQFNKPNTVNHISQQM). 4 disordered regions span residues 454–504 (PSKL…QQQQ), 545–564 (QSPN…QSML), 624–647 (LSQN…QQLQ), and 659–788 (QQQS…SVFE). Over residues 486–504 (QAQPAMVKSQQQQQQQQQQ) the composition is skewed to low complexity. Residues 659–697 (QQQSIPPVSSSLQPQLSALQQTQSHQLQQLLSSQNQQPL) show a composition bias toward low complexity. Positions 700-710 (GNNSFPASTFM) are enriched in polar residues. Residues 711 to 724 (QPPQIQVSPQQQGQ) show a composition bias toward low complexity. Residues 747–771 (SCSTSPSANNTGHDNVSPTNFLSRN) are compositionally biased toward polar residues. The segment covering 772 to 785 (QQQGQAASVSASDS) has biased composition (low complexity). Positions 958-1051 (RTYTKVQKRG…EVQQMSLDGD (94 aa)) constitute a PB1 domain.

It belongs to the ARF family. As to quaternary structure, homodimers and heterodimers. Interacts with the auxin-responsive protein IAA1. Binds to JMJ30. Binds to ATXR2 in the nucleus.

The protein localises to the nucleus. Functionally, auxin response factors (ARFs) are transcriptional factors that bind specifically to the DNA sequence 5'-TGTCTC-3' found in the auxin-responsive promoter elements (AuxREs). Could act as transcriptional activator or repressor. Formation of heterodimers with Aux/IAA proteins may alter their ability to modulate early auxin response genes expression. Involved in ethylene responses. Regulates lateral root formation through direct regulation of LBD16 and/or LBD29. Functionally redundant with ARF7. Involved in cellular dedifferentiation during callus formation on callus-inducing medium (CIM) and in an ATXR2-dependent manner. The sequence is that of Auxin response factor 19 from Arabidopsis thaliana (Mouse-ear cress).